Consider the following 688-residue polypeptide: MQVSSLNEVKIYSLSCGKSLPEWLSDRKKRALQKKDVDVRRRIELIQDFEMPTVCTTIKVSKDGQYILATGTYKPRVRCYDTYQLSLKFERCLDSEVVTFEILSDDYSKIVFLHNDRYIEFHSQSGFYYKTRIPKFGRDFSYHYPSCDLYFVGASSEVYRLNLEQGRYLNPLQTDAAENNVCDINTVHGLFATGTIEGRVECWDPRVRKRVGVLDCALNSVTADSEINSLPTISALKFNGALSMAVGTSTGQVLLYDLRSDKPLLVKDHQYGLPIKSVHFQDSLDLVLSADSRIVKMWNKDSGKIFTSLEPEHDLNDVCLYPSSGMILTANESPKMGIYYIPVLGPAPRWCSFLDNLTEELEENPESTVYDDYKFVTKKDLENLGLTHLIGSPFLRAYMHGFFMDIRLYHKVKLMVNPFAYEEYRKDKIRQKIEETRAQRVQLKKLPKVNKELALKLIEEEEEKQKSTLKKKVKSLPNILTDDRFKVMFENPDFQVDEDSEEFRLLNPLVSRISEKRKKQLRLLEQQEQLKNEEEEEPEGKPSDAESSESSDDEKDWVEEVRKQRRLLQQEERVKRQEQLKEDQQTVLKPQFYEIKAGEEFRSFKESATKQKLMNKTLEDRLKLEAKHGTLSVSDTTVGSKQLTFTLKRSEQQKKQQEAEKLHRQERKKLRRSASHLRSRPRRGRPFH.

N-acetylmethionine is present on methionine 1. Position 25 is a phosphoserine (serine 25). WD repeat units follow at residues 50–90 (EMPT…LKFE), 174–213 (TDAAENNVCDINTVHGLFATGTIEGRVECWDPRVRKRVGV), 228–266 (NSLPTISALKFNGALSMAVGTSTGQVLLYDLRSDKPLLV), 270–308 (QYGLPIKSVHFQDSLDLVLSADSRIVKMWNKDSGKIFTS), and 310–349 (EPEHDLNDVCLYPSSGMILTANESPKMGIYYIPVLGPAPR). Residues 423 to 476 (EYRKDKIRQKIEETRAQRVQLKKLPKVNKELALKLIEEEEEKQKSTLKKKVKSL) adopt a coiled-coil conformation. Serine 475 bears the Phosphoserine mark. Phosphothreonine is present on threonine 481. Coiled-coil stretches lie at residues 512–589 (RISE…TVLK) and 640–673 (SKQLTFTLKRSEQQKKQQEAEKLHRQERKKLRRS). Serine 514 bears the Phosphoserine mark. Disordered stretches follow at residues 528 to 561 (EQLKNEEEEEPEGKPSDAESSESSDDEKDWVEEV), 570 to 589 (QEERVKRQEQLKEDQQTVLK), and 644 to 688 (TFTL…RPFH). Positions 546 to 557 (ESSESSDDEKDW) are enriched in acidic residues. Composition is skewed to basic and acidic residues over residues 570–584 (QEERVKRQEQLKEDQ) and 648–663 (KRSEQQKKQQEAEKLH). The segment covering 664-688 (RQERKKLRRSASHLRSRPRRGRPFH) has biased composition (basic residues).

Belongs to the WD repeat NOL10/ENP2 family.

It localises to the nucleus. The protein resides in the nucleolus. The polypeptide is Nucleolar protein 10 (Nol10) (Rattus norvegicus (Rat)).